The sequence spans 278 residues: Probable endonuclease 4 (278 aa).

9 residues coordinate Zn(2+): His69, His109, Glu145, Asp179, His182, His214, Asp227, His229, and Glu259.

The protein belongs to the AP endonuclease 2 family. The cofactor is Zn(2+).

The catalysed reaction is Endonucleolytic cleavage to 5'-phosphooligonucleotide end-products.. In terms of biological role, endonuclease IV plays a role in DNA repair. It cleaves phosphodiester bonds at apurinic or apyrimidinic (AP) sites, generating a 3'-hydroxyl group and a 5'-terminal sugar phosphate. This chain is Probable endonuclease 4, found in Phocaeicola vulgatus (strain ATCC 8482 / DSM 1447 / JCM 5826 / CCUG 4940 / NBRC 14291 / NCTC 11154) (Bacteroides vulgatus).